Consider the following 182-residue polypeptide: NADH-quinone oxidoreductase subunit I (182 aa).

4Fe-4S ferredoxin-type domains follow at residues 50 to 82 and 92 to 121; these read IILS…LQKA and EFFR…MTPD. Positions 62, 65, 68, 72, 101, 104, 107, and 111 each coordinate [4Fe-4S] cluster.

Belongs to the complex I 23 kDa subunit family. NDH-1 is composed of 14 different subunits. Subunits NuoA, H, J, K, L, M, N constitute the membrane sector of the complex. [4Fe-4S] cluster is required as a cofactor.

It localises to the cell inner membrane. It catalyses the reaction a quinone + NADH + 5 H(+)(in) = a quinol + NAD(+) + 4 H(+)(out). Its function is as follows. NDH-1 shuttles electrons from NADH, via FMN and iron-sulfur (Fe-S) centers, to quinones in the respiratory chain. The immediate electron acceptor for the enzyme in this species is believed to be ubiquinone. Couples the redox reaction to proton translocation (for every two electrons transferred, four hydrogen ions are translocated across the cytoplasmic membrane), and thus conserves the redox energy in a proton gradient. The chain is NADH-quinone oxidoreductase subunit I from Psychrobacter arcticus (strain DSM 17307 / VKM B-2377 / 273-4).